Reading from the N-terminus, the 1124-residue chain is SH3 and PX domain-containing protein 2A (1124 aa).

The 125-residue stretch at 4–128 (YCVQDATVVD…RFFEARPEDV (125 aa)) folds into the PX domain. Positions 166-225 (MILEQYVVVSNYKKQENSELSLQAGEVVDVIEKNESGWWFVSTSEEQGWVPATYLEAQNG) constitute an SH3 1 domain. Phosphothreonine is present on Thr256. Residues 266-325 (SREEKYVTVQPYTSQSKDEIGFEKGVTVEVIRKNLEGWWYIRYLGKEGWAPASYLKKAKD) enclose the SH3 2 domain. 2 positions are modified to phosphoserine: Ser405 and Ser420. Disordered regions lie at residues 414 to 443 (QRAQ…PKPP), 504 to 672 (RKKP…KLKA), 692 to 830 (SVTI…PKKE), and 886 to 952 (YLVA…GKTS). One can recognise an SH3 3 domain in the interval 447–506 (SVEVEYYTIAEFQSCISDGISFRGGQKAEVIDKNSGGWWYVQIGEKEGWAPASYIDKRKK). Phosphoserine occurs at positions 546 and 566. Residues 575-585 (SGDRGSGDKHP) show a composition bias toward basic and acidic residues. At Ser592 the chain carries Phosphoserine. Acidic residues predominate over residues 607–619 (SSEDVALEEETIY). Composition is skewed to low complexity over residues 633-669 (SARG…SLLK) and 692-709 (SVTI…SSLS). Phosphoserine is present on Ser643. Positions 713–739 (GDLKPRSASDAGIRDTPKVGTKKDPDV) are enriched in basic and acidic residues. A Phosphothreonine modification is found at Thr728. Residues Ser764, Ser766, and Ser812 each carry the phosphoserine modification. A Phosphothreonine modification is found at Thr822. Residues 833–892 (GQGATYVTCSAYQKVQDSEISFPEGAEVHVLEKAESGWWYVRFGELEGWAPSHYLVAEEN) enclose the SH3 4 domain. Residues 907 to 937 (SSQNEGKSDSLEKIEKRVQALNTVNQSKRAT) are a coiled coil. Residues 912–924 (GKSDSLEKIEKRV) are compositionally biased toward basic and acidic residues. The span at 926–935 (ALNTVNQSKR) shows a compositional bias: polar residues. Phosphoserine occurs at positions 993, 1007, 1008, and 1029. The disordered stretch occupies residues 1020 to 1050 (KGRLAERAASQGSESPLLPTQRKGIPVSPVR). Residues 1063 to 1124 (NLKDVYISIA…VPSNYLEKKN (62 aa)) enclose the SH3 5 domain.

This sequence belongs to the SH3PXD2 family. Interacts with ADAM12, ADAM15 and ADAM19. Interacts with NOXO1. Interacts (via SH3 domains) with NOXA1; the interaction is direct. Interacts (via N-terminus) with CYBA. Interacts with FASLG. Interacts (via PX domain) with RAB40B (GTP-bound); interaction promotes invadopodia-mediated extracellular matrix degradation. Tyrosine phosphorylated by SRC. Phosphorylation plays a regulatory role in the protein localization. The intramolecular interaction of the PX domain with the third SH3 domain maintains the protein in the cytoplasm and phosphorylation disrupts this interaction, resulting in the redistribution of the protein from cytoplasm to the perimembrane region. Phosphorylated on serine upon DNA damage, probably by ATM or ATR. In terms of tissue distribution, widely expressed. Not found in the spleen and testis.

It localises to the cytoplasm. The protein resides in the cell projection. Its subcellular location is the podosome. Its function is as follows. Adapter protein involved in invadopodia and podosome formation, extracellular matrix degradation and invasiveness of some cancer cells. Binds matrix metalloproteinases (ADAMs), NADPH oxidases (NOXs) and phosphoinositides. Acts as an organizer protein that allows NOX1- or NOX3-dependent reactive oxygen species (ROS) generation and ROS localization. In association with ADAM12, mediates the neurotoxic effect of amyloid-beta peptide. In Mus musculus (Mouse), this protein is SH3 and PX domain-containing protein 2A.